Reading from the N-terminus, the 463-residue chain is tRNA-2-methylthio-N(6)-dimethylallyladenosine synthase (463 aa).

Residues 19–135 form the MTTase N-terminal domain; sequence GSYWITTFGC…LESLLNQVDS (117 aa). [4Fe-4S] cluster-binding residues include cysteine 28, cysteine 64, cysteine 98, cysteine 170, cysteine 174, and cysteine 177. A Radical SAM core domain is found at 156–393; sequence RDSSFCGWVN…NSLVENIAKE (238 aa). The 68-residue stretch at 396–463 folds into the TRAM domain; the sequence is QRYKNTSQEI…RPFSLTAKLL (68 aa).

This sequence belongs to the methylthiotransferase family. MiaB subfamily. As to quaternary structure, monomer. Requires [4Fe-4S] cluster as cofactor.

It localises to the cytoplasm. It carries out the reaction N(6)-dimethylallyladenosine(37) in tRNA + (sulfur carrier)-SH + AH2 + 2 S-adenosyl-L-methionine = 2-methylsulfanyl-N(6)-dimethylallyladenosine(37) in tRNA + (sulfur carrier)-H + 5'-deoxyadenosine + L-methionine + A + S-adenosyl-L-homocysteine + 2 H(+). Functionally, catalyzes the methylthiolation of N6-(dimethylallyl)adenosine (i(6)A), leading to the formation of 2-methylthio-N6-(dimethylallyl)adenosine (ms(2)i(6)A) at position 37 in tRNAs that read codons beginning with uridine. This is tRNA-2-methylthio-N(6)-dimethylallyladenosine synthase from Prochlorococcus marinus (strain NATL1A).